The chain runs to 108 residues: Replication initiation control protein YabA (108 aa).

Positions 83, 85, 99, and 102 each coordinate Zn(2+).

This sequence belongs to the YabA family. Homotetramer. Interacts with both DnaA and DnaN, acting as a bridge between these two proteins. It depends on Zn(2+) as a cofactor.

It localises to the cytoplasm. The protein resides in the nucleoid. Functionally, involved in control of chromosome replication initiation. Inhibits the cooperative binding of DnaA to the oriC region, thus negatively regulating initiation of chromosome replication. Inhibits the ability of DnaA-ATP to form a helix on DNA; does not disassemble preformed DnaA-DNA helices. Decreases the residence time of DnaA on the chromosome at its binding sites (oriC, replication forks and promoter-binding sites). Tethers DnaA to the replication machinery via the DNA polymerase beta sliding clamp subunit (dnaN). Associates with oriC and other DnaA targets on the chromosome in a DnaA-dependent manner. The polypeptide is Replication initiation control protein YabA (Lactococcus lactis subsp. cremoris (strain SK11)).